Here is a 459-residue protein sequence, read N- to C-terminus: Cysteine--tRNA ligase (459 aa).

Cysteine 28 contributes to the Zn(2+) binding site. The short motif at 30–40 (VTIYDLCHIGH) is the 'HIGH' region element. The Zn(2+) site is built by cysteine 209, histidine 234, and glutamate 238. Positions 266-270 (KMSKS) match the 'KMSKS' region motif. Lysine 269 provides a ligand contact to ATP.

This sequence belongs to the class-I aminoacyl-tRNA synthetase family. In terms of assembly, monomer. It depends on Zn(2+) as a cofactor.

The protein localises to the cytoplasm. It catalyses the reaction tRNA(Cys) + L-cysteine + ATP = L-cysteinyl-tRNA(Cys) + AMP + diphosphate. This is Cysteine--tRNA ligase from Shewanella loihica (strain ATCC BAA-1088 / PV-4).